Here is a 195-residue protein sequence, read N- to C-terminus: NAD(P)H-quinone oxidoreductase subunit J, chloroplastic (195 aa).

This sequence belongs to the complex I 30 kDa subunit family. NDH is composed of at least 16 different subunits, 5 of which are encoded in the nucleus.

It is found in the plastid. Its subcellular location is the chloroplast thylakoid membrane. The catalysed reaction is a plastoquinone + NADH + (n+1) H(+)(in) = a plastoquinol + NAD(+) + n H(+)(out). The enzyme catalyses a plastoquinone + NADPH + (n+1) H(+)(in) = a plastoquinol + NADP(+) + n H(+)(out). In terms of biological role, NDH shuttles electrons from NAD(P)H:plastoquinone, via FMN and iron-sulfur (Fe-S) centers, to quinones in the photosynthetic chain and possibly in a chloroplast respiratory chain. The immediate electron acceptor for the enzyme in this species is believed to be plastoquinone. Couples the redox reaction to proton translocation, and thus conserves the redox energy in a proton gradient. In Chlorokybus atmophyticus (Soil alga), this protein is NAD(P)H-quinone oxidoreductase subunit J, chloroplastic.